Here is a 419-residue protein sequence, read N- to C-terminus: UDP-N-acetylglucosamine 1-carboxyvinyltransferase (419 aa).

Residue 22–23 coordinates phosphoenolpyruvate; that stretch reads KN. R93 contacts UDP-N-acetyl-alpha-D-glucosamine. Catalysis depends on C117, which acts as the Proton donor. 2-(S-cysteinyl)pyruvic acid O-phosphothioketal is present on C117. Residues D306 and V328 each contribute to the UDP-N-acetyl-alpha-D-glucosamine site.

Belongs to the EPSP synthase family. MurA subfamily.

It localises to the cytoplasm. The enzyme catalyses phosphoenolpyruvate + UDP-N-acetyl-alpha-D-glucosamine = UDP-N-acetyl-3-O-(1-carboxyvinyl)-alpha-D-glucosamine + phosphate. Its pathway is cell wall biogenesis; peptidoglycan biosynthesis. In terms of biological role, cell wall formation. Adds enolpyruvyl to UDP-N-acetylglucosamine. The sequence is that of UDP-N-acetylglucosamine 1-carboxyvinyltransferase from Thioalkalivibrio sulfidiphilus (strain HL-EbGR7).